The sequence spans 3387 residues: MNQRKKVVRPPFNMLKRERNRVSTPQGLVKRFSTGLFSGKGPLRMVLAFITFLRVLSIPPTAGILKRWGQLKKNKAIKILTGFRKEIGRMLNILNGRKRSTMTLLCLIPTAMAFHLSTRDGEPLMIVARHERGRPLLFKTTEGINKCTLIAMDLGEMCEDTVTYECPLLVNTEPEDIDCWCNLTSAWVMYGTCTQSGERRREKRSVALTPHSGMGLETRAETWMSSEGAWKHAQRVESWILRNPGFALLAGFMAYMIGQTGIQRTVFFVLMMLVAPSYGMRCVGVGNRDFVEGVSGGAWVDLVLEHGGCVTTMAQGKPTLDFELIKTTAKEVALLRTYCIEASISNITTATRCPTQGEPYLKEEQDQQYICRRDVVDRGWGNGCGLFGKGGVVTCAKFSCSGKITGNLVQIENLEYTVVVTVHNGDTHAVGNDIPNHGVTATITPRSPSVEVKLPDYGELTLDCEPRSGIDFNEMILMKMKKKTWLVHKQWFLDLPLPWAAGADTSEVHWNYKERMVTFKVPHAKRQDVTVLGSQEGAMHSALTGATEVDSGDGNHMFAGHLKCKVRMEKLRIKGMSYTMCSGKFSIDKEMAETQHGTTVVKVKYEGAGAPCKVPIEIRDVNKEKVVGRIISSTPFAEYTNSVTNIELEPPFGDSYIVIGVGDSALTLHWFRKGSSIGKMLESTYRGAKRMAILGETAWDFGSVGGLLTSLGKAVHQVFGSVYTTMFGGVSWMVRILIGFLVLWIGTNSRNTSMAMTCIAVGGITLFLGFTVHADTGCAVSWSGKELKCGSGIFVIDNVHTWTEQYKFQPESPARLASAILNAHEDGVCGIRSTTRLENIMWKQITNELNYVLWEGGHDLTVVAGDVKGVLSKGKRALAPPVNDLKYSWKTWGKAKIFTPEAKNSTFLIDGPDTSECPNERRAWNFLEVEDYGFGMFTTNIWMKFREGSSEVCDHRLMSAAIKDQKAVHADMGYWIESSKNQTWQIEKASLIEVKTCLWPKTHTLWSNGVLESQMLIPKAYAGPFSQHNYRQGYATQTVGPWHLGKLEIDFGECPGTTVTIQEDCDHRGPSLRTTTASGKLVTQWCCRSCTMPPLRFLGEDGCWYGMEIRPLSEKEENMVKSQVSAGQGTSETFSMGLLCLTLFVEECLRRRVTRKHMILVVVTTLCAIILGGLTWMDLLRALIMLGDTMSGRMGGQIHLAIMAVFKMSPGYVLGIFLRKLTSRETALMVIGMAMTTVLSIPHDLMEFIDGISLGLILLKMVTHFDNTQVGTLALSLTFIRSTMPLVMAWRTIMAVLFVVTLIPLCRTSCLQKQSHWVEITALILGAQALPVYLMTLMKGASKRSWPLNEGIMAVGLVSLLGSALLKNDVPLAGPMVAGGLLLAAYVMSGSSADLSLEKAANVQWDEMADITGSSPIIEVKQDEDGSFSIRDIEETNMITLLVKLALITVSGLYPLAIPVTMTLWYMWQVKTQRSGALWDVPSPAAAQKATLTEGVYRIMQRGLFGKTQVGVGIHMEGVFHTMWHVTRGSVICHETGRLEPSWADVRNDMISYGGGWRLGDKWDKEEDVQVLAIEPGKNPKHVQTKPGLFKTLTGEIGAVTLDFKPGTSGSPIINRKGKVIGLYGNGVVTKSGDYVSAITQAERTGEPDYEVDEDIFRKKRLTIMDLHPGAGKTKRILPSIVREALKRRLRTLILAPTRVVAAEMEEALRGLPIRYQTPAVKSEHTGREIVDLMCHATFTTRLLSSTRVPNYNLIVMDEAHFTDPSSVAARGYISTRVEMGEAAAIFMTATPPGATDPFPQSNSPIEDIEREIPERSWNTGFDWITDYQGKTVWFVPSIKAGNDIANCLRKSGKKVIQLSRKTFDTEYPKTKLTDWDFVVTTDISEMGANFRAGRVIDPRRCLKPVISTDGPERVILAGPIPVTPASAAQRRGRIGRNPAQEDDQYVFSGDPLKNDEDHAHWTEAKMLLDNIYTPEGIIPTLFGPEREKNQAIDGEFRLRGEQRKTFVELMRRGDLPVWLSYKVASAGISYKDREWCFTGERNNQILEENMEVEIWTREGEKKKLRPKWLDARVYADPMALKDFKEFASGRKSITLDILTEIASLPTYLSSRAKLALDNIVMLHTTERGGKAYQHALNELPESLETLMLVALLGAMTAGIFLFFMQGKGIGKLSMGLIAIAVASGLLWVAEIQPQWIAASIILEFFLMVLLIPEPEKQRTPQDNQLIYVILTILTIIGLIAANEMGLIEKTKTDFGFYQVKTETTILDVDLRPASAWTLYAVATTILTPMLRHTIENTSANLSLAAIANQAAVLMGLGKGWPLHRMDLGVPLLAMGCYSQVNPTTLIASLVMLLVHYAIIGPGLQAKATREAQKRTAAGIMKNPTVDGITVIDLEPISYDPKFEKQLGQVMLLVLCAGQLLLMRTTWAFCEVLTLATGPVLTLWEGNPGRFWNTTIAVSTANIFRGSYLAGAGLAFSLIKNAQTPRRGTGTTGETLGEKWKRQLNSLDRKEFEEYKRSGILEVDRTEAKSALKDGSKIKHAVSRGSSKIRWIVERGMVKPKGKVVDLGCGRGGWSYYMATLKNVTEVKGYTKGGPGHEEPIPMATYGWNLVKLHSGVDVFYKPTEQVDTLLCDIGESSSNPTIEEGRTLRVLKMVEPWLSSKPEFCIKVLNPYMPTVIEELEKLQRKHGGSLVRCPLSRNSTHEMYWVSGVSGNIVSSVNTTSKMLLNRFTTRHRKPTYEKDVDLGAGTRSVSTETEKPDMTIIGRRLQRLQEEHKETWHYDQENPYRTWAYHGSYEAPSTGSASSMVNGVVKLLTKPWDVIPMVTQLAMTDTTPFGQQRVFKEKVDTRTPQPKPGTRMVMTTTANWLWALLGKKKNPRLCTREEFISKVRSNAAIGAVFQEEQGWTSASEAVNDSRFWELVDKERALHQEGKCESCVYNMMGKREKKLGEFGRAKGSRAIWYMWLGARFLEFEALGFLNEDHWFGRENSWSGVEGEGLHRLGYILEDIDKKDGDLIYADDTAGWDTRITEDDLLNEELITEQMAPHHKILAKAIFKLTYQNKVVKVLRPTPKGAVMDIISRKDQRGSGQVGTYGLNTFTNMEVQLIRQMEAEGVITQDDMHNPKGLKERVEKWLKECGVDRLKRMAISGDDCVVKPLDERFSTSLLFLNDMGKVRKDIPQWEPSKGWKNWQEVPFCSHHFHKIFMKDGRSLVVPCRNQDELIGRARISQGAGWSLRETACLGKAYAQMWSLMYFHRRDLRLASMAICSAVPTEWFPTSRTTWSIHAHHQWMTTEDMLKVWNRVWIEDNPNMTDKTPVHSWEDIPYLGKREDLWCGSLIGLSSRATWAKNIHTAITQVRNLIGKEEYVDYMPVMKRYSAPFESEGVL.

At 1 to 100 (MNQRKKVVRP…LNILNGRKRS (100 aa)) the chain is on the cytoplasmic side. Residues 36–71 (LFSGKGPLRMVLAFITFLRVLSIPPTAGILKRWGQL) are hydrophobic; homodimerization of capsid protein C. A propeptide spans 100–113 (STMTLLCLIPTAMA) (ER anchor for the capsid protein C, removed in mature form by serine protease NS3). The helical transmembrane segment at 101–117 (TMTLLCLIPTAMAFHLS) threads the bilayer. Residues 118-237 (TRDGEPLMIV…GAWKHAQRVE (120 aa)) are Extracellular-facing. Asn-182 carries an N-linked (GlcNAc...) asparagine; by host glycan. The helical transmembrane segment at 238–258 (SWILRNPGFALLAGFMAYMIG) threads the bilayer. Residues 259–265 (QTGIQRT) lie on the Cytoplasmic side of the membrane. Residues 266 to 279 (VFFVLMMLVAPSYG) traverse the membrane as a helical segment. At 280–723 (MRCVGVGNRD…AVHQVFGSVY (444 aa)) the chain is on the extracellular side. Intrachain disulfides connect Cys-282–Cys-309, Cys-339–Cys-400, Cys-353–Cys-384, Cys-371–Cys-395, Cys-464–Cys-564, and Cys-581–Cys-612. N-linked (GlcNAc...) asparagine; by host glycosylation occurs at Asn-346. The segment at 377 to 390 (DRGWGNGCGLFGKG) is fusion peptide. The helical transmembrane segment at 724–746 (TTMFGGVSWMVRILIGFLVLWIG) threads the bilayer. The Cytoplasmic segment spans residues 747–750 (TNSR). Residues 751–771 (NTSMAMTCIAVGGITLFLGFT) form a helical membrane-spanning segment. The Extracellular portion of the chain corresponds to 772 to 1194 (VHADTGCAVS…MLGDTMSGRM (423 aa)). 6 disulfide bridges follow: Cys-778–Cys-789, Cys-829–Cys-917, Cys-953–Cys-997, Cys-1054–Cys-1103, Cys-1065–Cys-1087, and Cys-1086–Cys-1090. Asn-904 and Asn-981 each carry an N-linked (GlcNAc...) asparagine; by host glycan. Residues 1195–1218 (GGQIHLAIMAVFKMSPGYVLGIFL) traverse the membrane as a helical segment. Topologically, residues 1219-1224 (RKLTSR) are lumenal. The helical transmembrane segment at 1225–1243 (ETALMVIGMAMTTVLSIPH) threads the bilayer. Residues 1244–1267 (DLMEFIDGISLGLILLKMVTHFDN) lie on the Cytoplasmic side of the membrane. Residues 1268–1288 (TQVGTLALSLTFIRSTMPLVM) traverse the membrane as a helical segment. Ala-1289 is a topological domain (lumenal). A helical membrane pass occupies residues 1290–1308 (WRTIMAVLFVVTLIPLCRT). The Lumenal portion of the chain corresponds to 1309-1316 (SCLQKQSH). A helical membrane pass occupies residues 1317 to 1337 (WVEITALILGAQALPVYLMTL). The Cytoplasmic portion of the chain corresponds to 1338 to 1345 (MKGASKRS). A helical membrane pass occupies residues 1346–1366 (WPLNEGIMAVGLVSLLGSALL). Over 1367 to 1369 (KND) the chain is Lumenal. The chain crosses the membrane as a helical span at residues 1370-1390 (VPLAGPMVAGGLLLAAYVMSG). The Cytoplasmic segment spans residues 1391-1437 (SSADLSLEKAANVQWDEMADITGSSPIIEVKQDEDGSFSIRDIEETN). The segment at 1397-1436 (LEKAANVQWDEMADITGSSPIIEVKQDEDGSFSIRDIEET) is interacts with and activates NS3 protease. The helical intramembrane region spans 1438–1458 (MITLLVKLALITVSGLYPLAI). Residues 1459-2146 (PVTMTLWYMW…LNELPESLET (688 aa)) lie on the Cytoplasmic side of the membrane. Positions 1475–1652 (SGALWDVPSP…ERTGEPDYEV (178 aa)) constitute a Peptidase S7 domain. Residues His-1525, Asp-1549, and Ser-1609 each act as charge relay system; for serine protease NS3 activity in the active site. One can recognise a Helicase ATP-binding domain in the interval 1654 to 1810 (EDIFRKKRLT…QSNSPIEDIE (157 aa)). Residues 1658–1661 (RKKR) are important for RNA-binding. Residue 1667-1674 (LHPGAGKT) participates in ATP binding. The DEAH box signature appears at 1758 to 1761 (DEAH). In terms of domain architecture, Helicase C-terminal spans 1820 to 1987 (TGFDWITDYQ…IIPTLFGPER (168 aa)). Lys-1862 carries the N6-acetyllysine; by host modification. The chain crosses the membrane as a helical span at residues 2147-2167 (LMLVALLGAMTAGIFLFFMQG). Residues 2168–2169 (KG) are Lumenal-facing. Positions 2170–2190 (IGKLSMGLIAIAVASGLLWVA) form an intramembrane region, helical. A topological domain (lumenal) is located at residue Glu-2191. A helical transmembrane segment spans residues 2192-2212 (IQPQWIAASIILEFFLMVLLI). Topologically, residues 2213 to 2225 (PEPEKQRTPQDNQ) are cytoplasmic. The helical transmembrane segment at 2226 to 2246 (LIYVILTILTIIGLIAANEMG) threads the bilayer. The Lumenal portion of the chain corresponds to 2247–2270 (LIEKTKTDFGFYQVKTETTILDVD). Positions 2271-2291 (LRPASAWTLYAVATTILTPML) form an intramembrane region, helical. The Lumenal portion of the chain corresponds to 2292–2301 (RHTIENTSAN). Residues Asn-2297 and Asn-2301 are each glycosylated (N-linked (GlcNAc...) asparagine; by host). The segment at residues 2302 to 2322 (LSLAAIANQAAVLMGLGKGWP) is an intramembrane region (helical). The Lumenal segment spans residues 2323-2343 (LHRMDLGVPLLAMGCYSQVNP). The helical transmembrane segment at 2344–2364 (TTLIASLVMLLVHYAIIGPGL) threads the bilayer. Residues 2365–2409 (QAKATREAQKRTAAGIMKNPTVDGITVIDLEPISYDPKFEKQLGQ) are Cytoplasmic-facing. A helical transmembrane segment spans residues 2410-2430 (VMLLVLCAGQLLLMRTTWAFC). Topologically, residues 2431 to 2455 (EVLTLATGPVLTLWEGNPGRFWNTT) are lumenal. Residue Asn-2453 is glycosylated (N-linked (GlcNAc...) asparagine; by host). A helical transmembrane segment spans residues 2456–2476 (IAVSTANIFRGSYLAGAGLAF). The Cytoplasmic portion of the chain corresponds to 2477–3387 (SLIKNAQTPR…SAPFESEGVL (911 aa)). One can recognise an mRNA cap 0-1 NS5-type MT domain in the interval 2489 to 2751 (TGTTGETLGE…DVDLGAGTRS (263 aa)). Ser-2543 lines the S-adenosyl-L-methionine pocket. The residue at position 2543 (Ser-2543) is a Phosphoserine. Lys-2548 serves as the catalytic For 2'-O-MTase activity. Positions 2564–2567 (VVDL) match the SUMO-interacting motif motif. Residues Gly-2573, Trp-2574, Thr-2591, Lys-2592, Asp-2618, and Val-2619 each coordinate S-adenosyl-L-methionine. Catalysis depends on Asp-2633, which acts as the For 2'-O-MTase activity. Ile-2634 contributes to the S-adenosyl-L-methionine binding site. Active-site for 2'-O-MTase activity residues include Lys-2668 and Glu-2704. Position 2706 (Tyr-2706) interacts with S-adenosyl-L-methionine. Glu-2925, His-2929, Cys-2934, and Cys-2937 together coordinate Zn(2+). The RdRp catalytic domain maps to 3016–3166 (LIYADDTAGW…PLDERFSTSL (151 aa)). Residues His-3200, Cys-3216, and Cys-3335 each contribute to the Zn(2+) site.

In the N-terminal section; belongs to the class I-like SAM-binding methyltransferase superfamily. mRNA cap 0-1 NS5-type methyltransferase family. Homodimer. Interacts (via N-terminus) with host EXOC1 (via C-terminus); this interaction results in EXOC1 degradation through the proteasome degradation pathway. In terms of assembly, forms heterodimers with envelope protein E in the endoplasmic reticulum and Golgi. As to quaternary structure, homodimer; in the endoplasmic reticulum and Golgi. Interacts with protein prM. Interacts with non-structural protein 1. Homodimer; Homohexamer when secreted. Interacts with envelope protein E. In terms of assembly, interacts (via N-terminus) with serine protease NS3. As to quaternary structure, forms a heterodimer with serine protease NS3. May form homooligomers. Forms a heterodimer with NS2B. Interacts with NS4B. Interacts with unphosphorylated RNA-directed RNA polymerase NS5; this interaction stimulates RNA-directed RNA polymerase NS5 guanylyltransferase activity. In terms of assembly, interacts with host MAVS; this interaction inhibits the synthesis of IFN-beta. Interacts with host AUP1; the interaction occurs in the presence of Dengue virus NS4B and induces lipophagy which facilitates production of virus progeny particles. As to quaternary structure, interacts with serine protease NS3. Homodimer. Interacts with host STAT2; this interaction inhibits the phosphorylation of the latter, and, when all viral proteins are present (polyprotein), targets STAT2 for degradation. Interacts with serine protease NS3. Interacts with host PAF1 complex; the interaction may prevent the recruitment of the PAF1 complex to interferon-responsive genes, and thus reduces the immune response. In terms of processing, specific enzymatic cleavages in vivo yield mature proteins. Cleavages in the lumen of endoplasmic reticulum are performed by host signal peptidase, whereas cleavages in the cytoplasmic side are performed by serine protease NS3. Signal cleavage at the 2K-4B site requires a prior NS3 protease-mediated cleavage at the 4A-2K site. Cleaved in post-Golgi vesicles by a host furin, releasing the mature small envelope protein M, and peptide pr. This cleavage is incomplete as up to 30% of viral particles still carry uncleaved prM. Post-translationally, N-glycosylated. In terms of processing, N-glycosylated. The excreted form is glycosylated and this is required for efficient secretion of the protein from infected cells. Acetylated by host KAT5. Acetylation modulates NS3 RNA-binding and unwinding activities and plays an important positive role for viral replication. Post-translationally, sumoylation of RNA-directed RNA polymerase NS5 increases NS5 protein stability allowing proper viral RNA replication. In terms of processing, phosphorylated on serines residues. This phosphorylation may trigger NS5 nuclear localization.

Its subcellular location is the virion. The protein resides in the host nucleus. It localises to the host cytoplasm. The protein localises to the host perinuclear region. It is found in the secreted. Its subcellular location is the virion membrane. The protein resides in the host endoplasmic reticulum membrane. It localises to the host mitochondrion. The catalysed reaction is Selective hydrolysis of -Xaa-Xaa-|-Yaa- bonds in which each of the Xaa can be either Arg or Lys and Yaa can be either Ser or Ala.. The enzyme catalyses RNA(n) + a ribonucleoside 5'-triphosphate = RNA(n+1) + diphosphate. It carries out the reaction a ribonucleoside 5'-triphosphate + H2O = a ribonucleoside 5'-diphosphate + phosphate + H(+). It catalyses the reaction ATP + H2O = ADP + phosphate + H(+). The catalysed reaction is a 5'-end (5'-triphosphoguanosine)-ribonucleoside in mRNA + S-adenosyl-L-methionine = a 5'-end (N(7)-methyl 5'-triphosphoguanosine)-ribonucleoside in mRNA + S-adenosyl-L-homocysteine. The enzyme catalyses a 5'-end (N(7)-methyl 5'-triphosphoguanosine)-ribonucleoside in mRNA + S-adenosyl-L-methionine = a 5'-end (N(7)-methyl 5'-triphosphoguanosine)-(2'-O-methyl-ribonucleoside) in mRNA + S-adenosyl-L-homocysteine + H(+). In terms of biological role, plays a role in virus budding by binding to the cell membrane and gathering the viral RNA into a nucleocapsid that forms the core of a mature virus particle. During virus entry, may induce genome penetration into the host cytoplasm after hemifusion induced by the surface proteins. Can migrate to the cell nucleus where it modulates host functions. Overcomes the anti-viral effects of host EXOC1 by sequestering and degrading the latter through the proteasome degradation pathway. Inhibits RNA silencing by interfering with host Dicer. Its function is as follows. Prevents premature fusion activity of envelope proteins in trans-Golgi by binding to envelope protein E at pH6.0. After virion release in extracellular space, gets dissociated from E dimers. Functionally, acts as a chaperone for envelope protein E during intracellular virion assembly by masking and inactivating envelope protein E fusion peptide. prM is the only viral peptide matured by host furin in the trans-Golgi network probably to avoid catastrophic activation of the viral fusion activity in acidic Golgi compartment prior to virion release. prM-E cleavage is inefficient, and many virions are only partially matured. These uncleaved prM would play a role in immune evasion. In terms of biological role, may play a role in virus budding. Exerts cytotoxic effects by activating a mitochondrial apoptotic pathway through M ectodomain. May display a viroporin activity. Binds to host cell surface receptor and mediates fusion between viral and cellular membranes. Envelope protein is synthesized in the endoplasmic reticulum in the form of heterodimer with protein prM. They play a role in virion budding in the ER, and the newly formed immature particle is covered with 60 spikes composed of heterodimer between precursor prM and envelope protein E. The virion is transported to the Golgi apparatus where the low pH causes dissociation of PrM-E heterodimers and formation of E homodimers. prM-E cleavage is inefficient, and many virions are only partially matured. These uncleaved prM would play a role in immune evasion. Its function is as follows. Involved in immune evasion, pathogenesis and viral replication. Once cleaved off the polyprotein, is targeted to three destinations: the viral replication cycle, the plasma membrane and the extracellular compartment. Essential for viral replication. Required for formation of the replication complex and recruitment of other non-structural proteins to the ER-derived membrane structures. Excreted as a hexameric lipoparticle that plays a role against host immune response. Antagonizing the complement function. Binds to the host macrophages and dendritic cells. Inhibits signal transduction originating from Toll-like receptor 3 (TLR3). Functionally, disrupts the host endothelial glycocalyx layer of host pulmonary microvascular endothelial cells, inducing degradation of sialic acid and shedding of heparan sulfate proteoglycans. NS1 induces expression of sialidases, heparanase, and activates cathepsin L, which activates heparanase via enzymatic cleavage. These effects are probably linked to the endothelial hyperpermeability observed in severe dengue disease. In terms of biological role, component of the viral RNA replication complex that functions in virion assembly and antagonizes the host immune response. Required cofactor for the serine protease function of NS3. May have membrane-destabilizing activity and form viroporins. Its function is as follows. Displays three enzymatic activities: serine protease, NTPase and RNA helicase. NS3 serine protease, in association with NS2B, performs its autocleavage and cleaves the polyprotein at dibasic sites in the cytoplasm: C-prM, NS2A-NS2B, NS2B-NS3, NS3-NS4A, NS4A-2K and NS4B-NS5. NS3 RNA helicase binds RNA and unwinds dsRNA in the 3' to 5' direction. Functionally, regulates the ATPase activity of the NS3 helicase activity. NS4A allows NS3 helicase to conserve energy during unwinding. Plays a role in the inhibition of the host innate immune response. Interacts with host MAVS and thereby prevents the interaction between RIGI and MAVS. In turn, IFN-beta production is impaired. Interacts with host AUP1 which mediates induction of lipophagy in host cells and facilitates production of virus progeny particles. In terms of biological role, functions as a signal peptide for NS4B and is required for the interferon antagonism activity of the latter. Induces the formation of ER-derived membrane vesicles where the viral replication takes place. Inhibits interferon (IFN)-induced host STAT1 phosphorylation and nuclear translocation, thereby preventing the establishment of cellular antiviral state by blocking the IFN-alpha/beta pathway. Its function is as follows. Replicates the viral (+) and (-) RNA genome, and performs the capping of genomes in the cytoplasm. NS5 methylates viral RNA cap at guanine N-7 and ribose 2'-O positions. Besides its role in RNA genome replication, also prevents the establishment of cellular antiviral state by blocking the interferon-alpha/beta (IFN-alpha/beta) signaling pathway. Inhibits host TYK2 and STAT2 phosphorylation, thereby preventing activation of JAK-STAT signaling pathway. May reduce immune responses by preventing the recruitment of the host PAF1 complex to interferon-responsive genes. This Aedes aegypti (Yellowfever mosquito) protein is Genome polyprotein.